The following is a 322-amino-acid chain: Acetyl-coenzyme A carboxylase carboxyl transferase subunit alpha (322 aa).

The region spanning 32-293 (DISEEIARLE…KRALQDALRQ (262 aa)) is the CoA carboxyltransferase C-terminal domain.

This sequence belongs to the AccA family. Acetyl-CoA carboxylase is a heterohexamer composed of biotin carboxyl carrier protein (AccB), biotin carboxylase (AccC) and two subunits each of ACCase subunit alpha (AccA) and ACCase subunit beta (AccD).

The protein resides in the cytoplasm. The catalysed reaction is N(6)-carboxybiotinyl-L-lysyl-[protein] + acetyl-CoA = N(6)-biotinyl-L-lysyl-[protein] + malonyl-CoA. It functions in the pathway lipid metabolism; malonyl-CoA biosynthesis; malonyl-CoA from acetyl-CoA: step 1/1. In terms of biological role, component of the acetyl coenzyme A carboxylase (ACC) complex. First, biotin carboxylase catalyzes the carboxylation of biotin on its carrier protein (BCCP) and then the CO(2) group is transferred by the carboxyltransferase to acetyl-CoA to form malonyl-CoA. This Aromatoleum aromaticum (strain DSM 19018 / LMG 30748 / EbN1) (Azoarcus sp. (strain EbN1)) protein is Acetyl-coenzyme A carboxylase carboxyl transferase subunit alpha.